The sequence spans 294 residues: Urease accessory protein UreD (294 aa).

Residues 1-22 (MSVEKPVAAGRQNSKATGRHKG) are disordered.

The protein belongs to the UreD family. UreD, UreF and UreG form a complex that acts as a GTP-hydrolysis-dependent molecular chaperone, activating the urease apoprotein by helping to assemble the nickel containing metallocenter of UreC. The UreE protein probably delivers the nickel.

It localises to the cytoplasm. Required for maturation of urease via the functional incorporation of the urease nickel metallocenter. This chain is Urease accessory protein UreD, found in Alcanivorax borkumensis (strain ATCC 700651 / DSM 11573 / NCIMB 13689 / SK2).